The chain runs to 90 residues: Mitochondrial import inner membrane translocase subunit Tim8 A (90 aa).

A Twin CX3C motif motif is present at residues 36-59 (CWEKCMDKPGPKLDSRTEVCFVNC). 2 cysteine pairs are disulfide-bonded: Cys36–Cys59 and Cys40–Cys55.

This sequence belongs to the small Tim family. Heterohexamer; composed of 3 copies of TIMM8A and 3 copies of TIMM13, named soluble 70 kDa complex. Associates with the TIM22 complex, whose core is composed of TIMM22.

It is found in the mitochondrion inner membrane. In terms of biological role, mitochondrial intermembrane chaperone that participates in the import and insertion of some multi-pass transmembrane proteins into the mitochondrial inner membrane. Also required for the transfer of beta-barrel precursors from the TOM complex to the sorting and assembly machinery (SAM complex) of the outer membrane. Acts as a chaperone-like protein that protects the hydrophobic precursors from aggregation and guide them through the mitochondrial intermembrane space. The TIMM8-TIMM13 complex mediates the import of some proteins while the predominant TIMM9-TIMM10 70 kDa complex mediates the import of much more proteins. The protein is Mitochondrial import inner membrane translocase subunit Tim8 A (timm8a) of Danio rerio (Zebrafish).